The sequence spans 216 residues: Calcium-binding protein 2 (216 aa).

The tract at residues 1–41 (MGNCAKTPWHRGSKERWQWPGSPLGGSRPSPGPRTEEQEGT) is disordered. Glycine 2 carries N-myristoyl glycine lipidation. Positions 20–29 (PGSPLGGSRP) are enriched in low complexity. 4 consecutive EF-hand domains span residues 74–109 (EEIE…LGYM), 125–142 (GKVD…KLLA), 148–183 (IGVR…LLGE), and 185–216 (LSQR…MMSR). Aspartate 87, aspartate 89, aspartate 91, tyrosine 93, and glutamate 98 together coordinate Ca(2+). Residues aspartate 161, asparagine 163, aspartate 165, cysteine 167, glutamate 172, aspartate 198, asparagine 200, aspartate 202, and glutamate 209 each contribute to the Ca(2+) site.

As to expression, expressed in the inner hair cells (IHCs), outer hair cells,(OHCs) and vestibular hair cells within the ear and in the retina (at protein level). Expressed in the retinal cone type 6 ON-bipolar cells and type 1 OFF-bipolar cells (at protein level). Expressed in the organ of Corti and spiral ganglion neurons in the cochlea (at protein level).

The protein localises to the cytoplasm. It localises to the perinuclear region. The protein resides in the cell membrane. Its subcellular location is the golgi apparatus. Required for sound encoding at inner hair cells (IHCs) synapses, likely via inhibition of the inactivation of voltage-gated calcium channel of type 1.3 (Cav1.3) in the IHCs. Required for the normal transfer of light signals through the retina. The protein is Calcium-binding protein 2 (Cabp2) of Mus musculus (Mouse).